The sequence spans 81 residues: Small ribosomal subunit protein bS20 (81 aa).

This sequence belongs to the bacterial ribosomal protein bS20 family.

In terms of biological role, binds directly to 16S ribosomal RNA. This chain is Small ribosomal subunit protein bS20, found in Mycoplasma capricolum subsp. capricolum (strain California kid / ATCC 27343 / NCTC 10154).